The sequence spans 317 residues: Small ribosomal subunit protein uS2 (317 aa).

Disordered stretches follow at residues 1 to 30 and 293 to 317; these read MENENLKVEQATTAENNMAEKADDSKASKE and RSFEQNSAEGVKTVEKTTTSTEVAE. Over residues 18 to 30 the composition is skewed to basic and acidic residues; the sequence is MAEKADDSKASKE. The segment covering 308-317 has biased composition (low complexity); it reads KTTTSTEVAE.

Belongs to the universal ribosomal protein uS2 family.

This chain is Small ribosomal subunit protein uS2, found in Mycoplasmopsis agalactiae (strain NCTC 10123 / CIP 59.7 / PG2) (Mycoplasma agalactiae).